A 560-amino-acid chain; its full sequence is Cytosolic purine 5'-nucleotidase (560 aa).

The active-site Nucleophile is Asp-52. The IMP site is built by Asp-52 and Asp-54. Positions 52 and 54 each coordinate Mg(2+). Asp-54 functions as the Proton donor in the catalytic mechanism. Residues Arg-144 and Asn-154 each contribute to the ATP site. Residues Arg-202, Asp-206, Lys-215, Thr-249, Asn-250, Ser-251, and Lys-292 each coordinate IMP. Residue Asp-351 coordinates Mg(2+). Position 418 is a phosphoserine (Ser-418). Gln-453 and Arg-456 together coordinate ATP. A phosphoserine mark is found at Ser-502, Ser-511, and Ser-527. A disordered region spans residues 541-560 (PQEITHCHDEDDDEEEEEEE). A required for tetramer assembly region spans residues 548–560 (HDEDDDEEEEEEE). The segment covering 550–560 (EDDDEEEEEEE) has biased composition (acidic residues).

This sequence belongs to the 5'(3')-deoxyribonucleotidase family. Homotetramer. Requires Mg(2+) as cofactor.

The protein resides in the cytoplasm. It localises to the cytosol. The catalysed reaction is a ribonucleoside 5'-phosphate + H2O = a ribonucleoside + phosphate. It catalyses the reaction a 2'-deoxyribonucleoside + a ribonucleoside 5'-phosphate = a ribonucleoside + a 2'-deoxyribonucleoside 5'-phosphate. The enzyme catalyses IMP + H2O = inosine + phosphate. It carries out the reaction GMP + H2O = guanosine + phosphate. The catalysed reaction is dIMP + H2O = 2'-deoxyinosine + phosphate. It catalyses the reaction dGMP + H2O = 2'-deoxyguanosine + phosphate. The enzyme catalyses XMP + H2O = xanthosine + phosphate. It carries out the reaction inosine + GMP = guanosine + IMP. The catalysed reaction is dGMP + inosine = 2'-deoxyguanosine + IMP. It catalyses the reaction dIMP + inosine = 2'-deoxyinosine + IMP. The enzyme catalyses inosine + UMP = uridine + IMP. It carries out the reaction inosine + CMP = cytidine + IMP. The catalysed reaction is inosine + AMP = IMP + adenosine. With respect to regulation, allosterically activated by various compounds including ATP, 2,3-BPG/2,3-Bisphosphoglyceric acid and Ap4A/P1,P4-bis(5'-adenosyl) tetraphosphate. Binding of an allosteric activator is a prerequisiste to magnesium and substrate binding. Inhibited by inorganic phosphate. Functionally, broad specificity cytosolic 5'-nucleotidase that catalyzes the dephosphorylation of 6-hydroxypurine nucleoside 5'-monophosphates. In addition, possesses a phosphotransferase activity by which it can transfer a phosphate from a donor nucleoside monophosphate to an acceptor nucleoside, preferably inosine, deoxyinosine and guanosine. Has the highest activities for IMP and GMP followed by dIMP, dGMP and XMP. Could also catalyze the transfer of phosphates from pyrimidine monophosphates but with lower efficiency. Through these activities regulates the purine nucleoside/nucleotide pools within the cell. This Rattus norvegicus (Rat) protein is Cytosolic purine 5'-nucleotidase.